Consider the following 708-residue polypeptide: Nucleolar protein 11-like (708 aa).

It localises to the nucleus. Its subcellular location is the nucleolus. Ribosome biogenesis factor. May be required for both optimal rDNA transcription and pre-rRNA processing. The polypeptide is Nucleolar protein 11-like (nol11) (Danio rerio (Zebrafish)).